Reading from the N-terminus, the 466-residue chain is Ribulose bisphosphate carboxylase large chain (466 aa).

The residue at position 5 (Lys5) is an N6,N6,N6-trimethyllysine. Residues Asn114 and Thr164 each contribute to the substrate site. Lys166 serves as the catalytic Proton acceptor. Lys168 is a substrate binding site. 3 residues coordinate Mg(2+): Lys192, Asp194, and Glu195. Lys192 carries the N6-carboxylysine modification. His285 (proton acceptor) is an active-site residue. Residues Arg286, His318, and Ser370 each contribute to the substrate site.

It belongs to the RuBisCO large chain family. Type I subfamily. Heterohexadecamer of 8 large chains and 8 small chains; disulfide-linked. The disulfide link is formed within the large subunit homodimers. The cofactor is Mg(2+). In terms of processing, the disulfide bond which can form in the large chain dimeric partners within the hexadecamer appears to be associated with oxidative stress and protein turnover.

Its subcellular location is the plastid. The protein localises to the chloroplast. It carries out the reaction 2 (2R)-3-phosphoglycerate + 2 H(+) = D-ribulose 1,5-bisphosphate + CO2 + H2O. It catalyses the reaction D-ribulose 1,5-bisphosphate + O2 = 2-phosphoglycolate + (2R)-3-phosphoglycerate + 2 H(+). In terms of biological role, ruBisCO catalyzes two reactions: the carboxylation of D-ribulose 1,5-bisphosphate, the primary event in carbon dioxide fixation, as well as the oxidative fragmentation of the pentose substrate in the photorespiration process. Both reactions occur simultaneously and in competition at the same active site. The sequence is that of Ribulose bisphosphate carboxylase large chain from Betula nigra (River birch).